A 24-amino-acid polypeptide reads, in one-letter code: Glutamate dehydrogenase (24 aa).

Belongs to the Glu/Leu/Phe/Val dehydrogenases family. As to quaternary structure, homohexamer.

The protein localises to the cytoplasm. It catalyses the reaction L-glutamate + NAD(+) + H2O = 2-oxoglutarate + NH4(+) + NADH + H(+). The catalysed reaction is L-glutamate + NADP(+) + H2O = 2-oxoglutarate + NH4(+) + NADPH + H(+). The polypeptide is Glutamate dehydrogenase (gdhA) (Pyrococcus woesei).